Consider the following 443-residue polypeptide: Oxygen-dependent coproporphyrinogen-III oxidase, mitochondrial (443 aa).

The N-terminal 98 residues, 1–98 (MALRLGQLGS…EMVPKSSGAR (98 aa)), are a transit peptide targeting the mitochondrion. The tract at residues 90-111 (MVPKSSGARSPSPGRLEEDGDE) is disordered. A Phosphoserine modification is found at serine 101. An important for dimerization region spans residues 182–191 (VLQDGRVFEK). Serine 233 serves as a coordination point for coproporphyrinogen III. Histidine 247 (proton donor) is an active-site residue. 249-251 (NYR) provides a ligand contact to coproporphyrinogen III. The important for dimerization stretch occupies residues 381–417 (YVEFNLVYDRGTKFGLFTPGSRIESILMSLPLTARWE). Position 393 is an N6-acetyllysine; alternate (lysine 393). Residue lysine 393 is modified to N6-succinyllysine; alternate. 400–402 (GSR) contributes to the coproporphyrinogen III binding site.

It belongs to the aerobic coproporphyrinogen-III oxidase family. Homodimer.

It is found in the mitochondrion intermembrane space. It carries out the reaction coproporphyrinogen III + O2 + 2 H(+) = protoporphyrinogen IX + 2 CO2 + 2 H2O. Its pathway is porphyrin-containing compound metabolism; protoporphyrin-IX biosynthesis; protoporphyrinogen-IX from coproporphyrinogen-III (O2 route): step 1/1. Involved in the heme biosynthesis. Catalyzes the aerobic oxidative decarboxylation of propionate groups of rings A and B of coproporphyrinogen-III to yield the vinyl groups in protoporphyrinogen-IX. In Rattus norvegicus (Rat), this protein is Oxygen-dependent coproporphyrinogen-III oxidase, mitochondrial.